The sequence spans 340 residues: GTP 3',8-cyclase (340 aa).

Positions 8–227 (KLGRPIRDLR…EMIEQNFDIE (220 aa)) constitute a Radical SAM core domain. R17 is a GTP binding site. [4Fe-4S] cluster contacts are provided by C24 and C28. Y30 lines the S-adenosyl-L-methionine pocket. C31 is a [4Fe-4S] cluster binding site. R71 is a binding site for GTP. G75 serves as a coordination point for S-adenosyl-L-methionine. T102 lines the GTP pocket. Position 126 (S126) interacts with S-adenosyl-L-methionine. Residue K163 participates in GTP binding. M197 is an S-adenosyl-L-methionine binding site. Positions 261 and 264 each coordinate [4Fe-4S] cluster. GTP is bound at residue 266 to 268 (RAR). C278 contributes to the [4Fe-4S] cluster binding site.

The protein belongs to the radical SAM superfamily. MoaA family. As to quaternary structure, monomer and homodimer. The cofactor is [4Fe-4S] cluster.

The enzyme catalyses GTP + AH2 + S-adenosyl-L-methionine = (8S)-3',8-cyclo-7,8-dihydroguanosine 5'-triphosphate + 5'-deoxyadenosine + L-methionine + A + H(+). It participates in cofactor biosynthesis; molybdopterin biosynthesis. In terms of biological role, catalyzes the cyclization of GTP to (8S)-3',8-cyclo-7,8-dihydroguanosine 5'-triphosphate. The sequence is that of GTP 3',8-cyclase from Staphylococcus saprophyticus subsp. saprophyticus (strain ATCC 15305 / DSM 20229 / NCIMB 8711 / NCTC 7292 / S-41).